The primary structure comprises 481 residues: NADH-quinone oxidoreductase subunit N (481 aa).

Transmembrane regions (helical) follow at residues 11–31 (AYPE…DLFA), 37–57 (YLAF…TCGI), 74–94 (AMSD…LIYS), 103–123 (LLKG…MVMV), 128–148 (LITL…MVAL), 162–182 (FFVL…MLYG), 205–225 (IFII…SAVP), 238–258 (PTAV…GFVM), 272–292 (WQGM…IAAI), 300–320 (MLAY…IAAG), 328–348 (MFYV…IMLV), 371–391 (LAFM…MIGF), 405–425 (GYIW…FYYL), and 457–477 (LAII…LSAI).

It belongs to the complex I subunit 2 family. As to quaternary structure, NDH-1 is composed of 14 different subunits. Subunits NuoA, H, J, K, L, M, N constitute the membrane sector of the complex.

Its subcellular location is the cell inner membrane. The enzyme catalyses a quinone + NADH + 5 H(+)(in) = a quinol + NAD(+) + 4 H(+)(out). Its function is as follows. NDH-1 shuttles electrons from NADH, via FMN and iron-sulfur (Fe-S) centers, to quinones in the respiratory chain. The immediate electron acceptor for the enzyme in this species is believed to be ubiquinone. Couples the redox reaction to proton translocation (for every two electrons transferred, four hydrogen ions are translocated across the cytoplasmic membrane), and thus conserves the redox energy in a proton gradient. In Nitrosomonas europaea (strain ATCC 19718 / CIP 103999 / KCTC 2705 / NBRC 14298), this protein is NADH-quinone oxidoreductase subunit N.